A 357-amino-acid chain; its full sequence is F-box only protein 25 (357 aa).

The segment at 1 to 83 (MPFLGQDWRS…NDTNTQCFYR (83 aa)) is interaction with beta-actin. Positions 225-273 (LTLSDLPVHMLSNILYRFSDGWDIVTLGQVTPTLSALSEDRQLWKKLCQ) constitute an F-box domain.

As to quaternary structure, part of a SCF (SKP1-cullin-F-box) protein ligase complex consisting of FBXO25, SKP1, CUL1 and RBX1. Interacts directly with SKP1 and CUL1. Interacts (via C-terminus) with beta-actin (via N-terminus).

The protein localises to the nucleus. The protein operates within protein modification; protein ubiquitination. Functionally, substrate-recognition component of the SCF (SKP1-CUL1-F-box protein)-type E3 ubiquitin ligase complex. May play a role in accumulation of expanded polyglutamine (polyQ) protein huntingtin (HTT). This Bos taurus (Bovine) protein is F-box only protein 25 (FBXO25).